Consider the following 261-residue polypeptide: uncharacterized protein (261 aa).

Belongs to the BtpA family.

This is an uncharacterized protein from Methanocaldococcus jannaschii (strain ATCC 43067 / DSM 2661 / JAL-1 / JCM 10045 / NBRC 100440) (Methanococcus jannaschii).